The sequence spans 157 residues: Cell number regulator 10 (157 aa).

The next 2 helical transmembrane spans lie at 41–57 (DCGLCCLTCWCPCITFG) and 66–83 (GATSCGTAGALYAVLAYF).

It belongs to the cornifelin family. As to expression, expressed in roots, leaves, stalks, immature ears and silks.

The protein localises to the membrane. This Zea mays (Maize) protein is Cell number regulator 10 (CNR10).